A 322-amino-acid polypeptide reads, in one-letter code: Cysteine protease YopT (322 aa).

The disordered stretch occupies residues Ser43 to Asp72. Catalysis depends on residues Cys139, His258, and Asp274.

This sequence belongs to the peptidase C58 family. In terms of assembly, interacts with human ARHA.

The protein localises to the secreted. Its function is as follows. Cysteine protease, which is translocated into infected cells and plays a central role in pathogenesis by cleaving the C-terminus end of the human small GTPase RhoA/ARHA, a regulator of cytoskeleton. Once cleaved, ARHA loses its lipid modification, and is released from the cell membrane, leading to the subsequent disruption of actin cytoskeleton of the host cell. This Yersinia enterocolitica protein is Cysteine protease YopT (yopT).